The chain runs to 207 residues: Adenine phosphoribosyltransferase (207 aa).

The interval 1–33 (MRPAKPPQSKERKRSKSLTSADHDNSPQRAETA) is disordered.

It belongs to the purine/pyrimidine phosphoribosyltransferase family. Homodimer.

It localises to the cytoplasm. It catalyses the reaction AMP + diphosphate = 5-phospho-alpha-D-ribose 1-diphosphate + adenine. It participates in purine metabolism; AMP biosynthesis via salvage pathway; AMP from adenine: step 1/1. Catalyzes a salvage reaction resulting in the formation of AMP, that is energically less costly than de novo synthesis. The sequence is that of Adenine phosphoribosyltransferase from Corynebacterium jeikeium (strain K411).